Consider the following 296-residue polypeptide: Cytidine deaminase (296 aa).

CMP/dCMP-type deaminase domains lie at 52 to 172 and 191 to 296; these read TAVE…FGPK and THAD…YFAL. A substrate-binding site is contributed by 93–95; the sequence is NQE. H106 contacts Zn(2+). E108 (proton donor) is an active-site residue. Residues C133 and C136 each contribute to the Zn(2+) site.

The protein belongs to the cytidine and deoxycytidylate deaminase family. As to quaternary structure, homodimer. Zn(2+) serves as cofactor.

It carries out the reaction cytidine + H2O + H(+) = uridine + NH4(+). The enzyme catalyses 2'-deoxycytidine + H2O + H(+) = 2'-deoxyuridine + NH4(+). Functionally, this enzyme scavenges exogenous and endogenous cytidine and 2'-deoxycytidine for UMP synthesis. The protein is Cytidine deaminase of Actinobacillus succinogenes (strain ATCC 55618 / DSM 22257 / CCUG 43843 / 130Z).